A 119-amino-acid polypeptide reads, in one-letter code: Large ribosomal subunit protein uL18 (119 aa).

Residues 1–26 form a disordered region; it reads MGQNDKAARRQKIKLRSKTRGQGTAA. Residues 9–19 show a composition bias toward basic residues; it reads RRQKIKLRSKT.

It belongs to the universal ribosomal protein uL18 family. As to quaternary structure, part of the 50S ribosomal subunit; part of the 5S rRNA/L5/L18/L25 subcomplex. Contacts the 5S and 23S rRNAs.

This is one of the proteins that bind and probably mediate the attachment of the 5S RNA into the large ribosomal subunit, where it forms part of the central protuberance. This Prosthecochloris aestuarii (strain DSM 271 / SK 413) protein is Large ribosomal subunit protein uL18.